We begin with the raw amino-acid sequence, 665 residues long: Transketolase 1 (665 aa).

Histidine 26 is a binding site for substrate. Thiamine diphosphate is bound by residues histidine 66 and glycine 114–leucine 116. Position 155 (aspartate 155) interacts with Mg(2+). Residues glycine 156 and asparagine 185 each contribute to the thiamine diphosphate site. Mg(2+)-binding residues include asparagine 185 and isoleucine 187. Substrate is bound by residues histidine 261, arginine 358, and serine 385. A thiamine diphosphate-binding site is contributed by histidine 261. Glutamate 412 (proton donor) is an active-site residue. Phenylalanine 438 contacts thiamine diphosphate. The substrate site is built by histidine 462, aspartate 470, and arginine 521.

This sequence belongs to the transketolase family. In terms of assembly, homodimer. The cofactor is Mg(2+). Ca(2+) is required as a cofactor. It depends on Mn(2+) as a cofactor. Requires Co(2+) as cofactor. Thiamine diphosphate serves as cofactor.

It catalyses the reaction D-sedoheptulose 7-phosphate + D-glyceraldehyde 3-phosphate = aldehydo-D-ribose 5-phosphate + D-xylulose 5-phosphate. Catalyzes the transfer of a two-carbon ketol group from a ketose donor to an aldose acceptor, via a covalent intermediate with the cofactor thiamine pyrophosphate. The protein is Transketolase 1 (tkt1) of Vibrio cholerae serotype O1 (strain ATCC 39315 / El Tor Inaba N16961).